Consider the following 1960-residue polypeptide: Nuclear pore complex protein Nup98-Nup96 (1960 aa).

A run of 46 repeats spans residues 2–3 (FG), 9–10 (FG), 18–19 (FG), 30–31 (FG), 35–36 (FG), 43–44 (FG), 59–60 (FG), 73–74 (FG), 81–82 (FG), 92–93 (FG), 105–106 (FG), 117–118 (FG), 125–126 (FG), 135–136 (FG), 148–149 (FG), 160–161 (FG), 163–164 (FG), 174–175 (FG), 264–265 (FG), 266–267 (FG), 282–283 (FG), 293–294 (FG), 304–305 (FG), 309–310 (FG), 319–320 (FG), 333–334 (FG), 352–353 (FG), 358–359 (FG), 365–366 (FG), 377–378 (FG), 384–385 (FG), 387–388 (FG), 400–401 (FG), 413–414 (FG), 426–427 (FG), 428–429 (FG), 441–442 (FG), 454–455 (FG), 467–468 (FG), 493–494 (FG), 496–497 (FG), 516–517 (FG), 527–528 (FG), 546–547 (FG), 553–554 (FG), and 565–566 (FG). The segment at 2 to 566 (FGGAKPSFGA…GGSLGGGGFG (565 aa)) is 46 X 2 AA repeats of F-G. Disordered regions lie at residues 698–768 (KSVE…WLHP) and 781–860 (TGMD…AANQ). The segment covering 704 to 718 (NPSSSIGSAPNTPQS) has biased composition (polar residues). Positions 755–768 (ESQDNGRRESWLHP) are enriched in basic and acidic residues. Composition is skewed to polar residues over residues 781-794 (TGMD…STLN) and 806-850 (RPSS…SNRS). The region spanning 886–1028 (RVGYYTIPSL…GSWVFRVKHF (143 aa)) is the Peptidase S59 domain. Ser1029 acts as the Nucleophile in catalysis.

Belongs to the nucleoporin GLFG family. In terms of assembly, part of the nuclear pore complex (NPC). Interacts with Rae1. Nuclear pore complex protein Nup98: Interacts with pzg and Chro. Interacts with MBD-R2; the interaction allows Nup98 recruitment to chromatin. Interacts with Trx. Interacts with Wds. Interacts with Mgtor and Cp190. Upon ecdysone stimulation, interacts with EcR, CTCF, su(Hw) and Trl. Post-translationally, isoform A and isoform C are autoproteolytically cleaved to yield Nup98 and Nup96 or Nup98 only, respectively. In terms of tissue distribution, expressed in brain.

The protein resides in the chromosome. The protein localises to the nucleus. It localises to the nucleoplasm. It is found in the nucleus membrane. Its subcellular location is the nuclear pore complex. Its function is as follows. Part of the nuclear pore complex (NPC). Required for MAD import as part of the Nup107-160 complex and required for nuclear export of Moe probably via its association with Rae1. Plays a role in nuclear mRNA export. Promotes cell antiviral response by up-regulating FoxK-dependent antiviral gene transcription. In germline stem cells, involved in their maintenance and division together with the TGF-Beta and EGFR signaling pathways. In larval lymph glands, has a role in the maintenance of hematopoiesis by regulating Pvr expression. Part of the nuclear pore complex (NPC). In the nucleoplasm, binds to transcriptionally active chromatin with a preference for regulatory regions; co-localizes with RNA polymerase II in a RNA-independent manner and before transition into transcription elongation. Plays a role in the transcriptional memory process by stabilizing enhancer-promoter loops and by mediating anchoring of chromatin to the nuclear pore complex region. During larval development, interacts with trx and MBD-R2 and regulates transcription of developmental genes including ecdysone-responsive genes such as Eip74 and E23. In terms of biological role, part of the nuclear pore complex (NPC). This Drosophila melanogaster (Fruit fly) protein is Nuclear pore complex protein Nup98-Nup96.